The following is a 130-amino-acid chain: Glycine cleavage system H protein (130 aa).

Residues 24 to 106 form the Lipoyl-binding domain; sequence TATVGITDFA…YGDGWMFKVK (83 aa). Lys65 carries the N6-lipoyllysine modification.

The protein belongs to the GcvH family. The glycine cleavage system is composed of four proteins: P, T, L and H. (R)-lipoate serves as cofactor.

Functionally, the glycine cleavage system catalyzes the degradation of glycine. The H protein shuttles the methylamine group of glycine from the P protein to the T protein. This Marinobacter nauticus (strain ATCC 700491 / DSM 11845 / VT8) (Marinobacter aquaeolei) protein is Glycine cleavage system H protein.